Consider the following 458-residue polypeptide: NADH-quinone oxidoreductase subunit N (458 aa).

Transmembrane regions (helical) follow at residues 2–22 (LLLL…CFAL), 30–50 (IIYN…FKYS), 71–91 (IILL…ILVG), 93–113 (TLKF…FVAI), 118–138 (FLLL…LAGF), 153–173 (FILG…IYGF), 196–216 (LIIG…SSPL), 235–255 (FTAA…KLII), 261–281 (INYN…AFGA), 290–310 (LMAY…LLHN), 319–339 (LYIL…IMLF), 361–381 (IAAL…LTGF), 397–417 (FTLA…YLKV), and 438–458 (LLLI…IILF).

This sequence belongs to the complex I subunit 2 family. In terms of assembly, NDH-1 is composed of 14 different subunits. Subunits NuoA, H, J, K, L, M, N constitute the membrane sector of the complex.

It is found in the cell inner membrane. The catalysed reaction is a quinone + NADH + 5 H(+)(in) = a quinol + NAD(+) + 4 H(+)(out). Its function is as follows. NDH-1 shuttles electrons from NADH, via FMN and iron-sulfur (Fe-S) centers, to quinones in the respiratory chain. The immediate electron acceptor for the enzyme in this species is believed to be ubiquinone. Couples the redox reaction to proton translocation (for every two electrons transferred, four hydrogen ions are translocated across the cytoplasmic membrane), and thus conserves the redox energy in a proton gradient. This is NADH-quinone oxidoreductase subunit N from Rickettsia prowazekii (strain Madrid E).